A 199-amino-acid chain; its full sequence is MLLGRLTSQLLRAVPWAGGRPPWPVSGVLGSRVCGPLYSTSPAGPGRAASLPRKGAQLELEEMLVPRKMSVSPLESWLTARCFLPRLDTGTAGTVAPPQSYQCPPSQIGEGAEQGDEGVADAPQIQCKNVLKIRRRKMNHHKYRKLVKKTRFLRRKVQEGRLRRKQIKFEKDLRRIWLKAGLKEAPEGWQTPKIYLRGK.

Belongs to the mitochondrion-specific ribosomal protein mS38 family. In terms of assembly, component of the mitochondrial small ribosomal subunit (mt-SSU). Mature mammalian 55S mitochondrial ribosomes consist of a small (28S) and a large (39S) subunit. The 28S small subunit contains a 12S ribosomal RNA (12S mt-rRNA) and 30 different proteins. The 39S large subunit contains a 16S rRNA (16S mt-rRNA), a copy of mitochondrial valine transfer RNA (mt-tRNA(Val)), which plays an integral structural role, and 52 different proteins. Interacts with Aurora-A. As to expression, ubiquitously expressed and especially highly expressed in heart, skeletal muscle and testis.

It is found in the mitochondrion matrix. It localises to the nucleus. In terms of biological role, may act as a negative regulator of Aurora-A kinase, by down-regulation through proteasome-dependent degradation. This is Small ribosomal subunit protein mS38 (AURKAIP1) from Homo sapiens (Human).